Here is a 682-residue protein sequence, read N- to C-terminus: Serine/threonine-protein kinase PLK2 (682 aa).

Residues 25-67 (ACGGDSKKKRPQQPSEDGQSQAQVTPAAPHHHHHHSHSGPEIS) are disordered. Over residues 36–48 (QQPSEDGQSQAQV) the composition is skewed to polar residues. The Protein kinase domain occupies 79–331 (YCRGKVLGKG…LDDIIRHDFF (253 aa)). ATP is bound by residues 85 to 93 (LGKGGFAKC) and Lys108. Asp202 acts as the Proton acceptor in catalysis. Thr236 bears the Phosphothreonine mark. A disordered region spans residues 402 to 430 (TSITQQPSKHRTDEELQPPPTTFAKSGTS). 2 consecutive POLO box domains span residues 500 to 578 (WVTK…YMEE) and 598 to 682 (YLLQ…QRCN).

It belongs to the protein kinase superfamily. Ser/Thr protein kinase family. CDC5/Polo subfamily. As to quaternary structure, interacts with CIB1. Interacts with NSF; causing NSF dissociation from GRIA2. Post-translationally, catalytic activity is enhanced by phosphorylation of Thr-236.

It is found in the cytoplasm. It localises to the cytoskeleton. Its subcellular location is the microtubule organizing center. The protein localises to the centrosome. The protein resides in the centriole. It is found in the cell projection. It localises to the dendrite. The catalysed reaction is L-seryl-[protein] + ATP = O-phospho-L-seryl-[protein] + ADP + H(+). It carries out the reaction L-threonyl-[protein] + ATP = O-phospho-L-threonyl-[protein] + ADP + H(+). Its activity is regulated as follows. Activated by phosphorylation of Thr-236. Once activated, activity is stimulated by binding target proteins. Tumor suppressor serine/threonine-protein kinase involved in synaptic plasticity, centriole duplication and G1/S phase transition. Polo-like kinases act by binding and phosphorylating proteins that are already phosphorylated on a specific motif recognized by the POLO box domains. Phosphorylates CPAP, NPM1, RAPGEF2, RASGRF1, SNCA, SIPA1L1 and SYNGAP1. Plays a key role in synaptic plasticity and memory by regulating the Ras and Rap protein signaling: required for overactivity-dependent spine remodeling by phosphorylating the Ras activator RASGRF1 and the Rap inhibitor SIPA1L1 leading to their degradation by the proteasome. Conversely, phosphorylates the Rap activator RAPGEF2 and the Ras inhibitor SYNGAP1, promoting their activity. Also regulates synaptic plasticity independently of kinase activity, via its interaction with NSF that disrupts the interaction between NSF and the GRIA2 subunit of AMPARs, leading to a rapid rundown of AMPAR-mediated current that occludes long term depression. Required for procentriole formation and centriole duplication by phosphorylating CPAP and NPM1, respectively. Its induction by p53/TP53 suggests that it may participate in the mitotic checkpoint following stress. This is Serine/threonine-protein kinase PLK2 (Plk2) from Rattus norvegicus (Rat).